We begin with the raw amino-acid sequence, 874 residues long: Alanine--tRNA ligase (874 aa).

Positions 564, 568, 665, and 669 each coordinate Zn(2+).

It belongs to the class-II aminoacyl-tRNA synthetase family. Zn(2+) is required as a cofactor.

The protein resides in the cytoplasm. It carries out the reaction tRNA(Ala) + L-alanine + ATP = L-alanyl-tRNA(Ala) + AMP + diphosphate. Its function is as follows. Catalyzes the attachment of alanine to tRNA(Ala) in a two-step reaction: alanine is first activated by ATP to form Ala-AMP and then transferred to the acceptor end of tRNA(Ala). Also edits incorrectly charged Ser-tRNA(Ala) and Gly-tRNA(Ala) via its editing domain. This chain is Alanine--tRNA ligase, found in Paraburkholderia phymatum (strain DSM 17167 / CIP 108236 / LMG 21445 / STM815) (Burkholderia phymatum).